Reading from the N-terminus, the 237-residue chain is Oligoribonuclease, mitochondrial (237 aa).

A mitochondrion-targeting transit peptide spans 1-25; the sequence is MLGGSLGSRLLRGVGGSHGRFGARG. In terms of domain architecture, Exonuclease spans 43 to 207; that stretch reads MVWVDLEMTG…DDISESIKEL (165 aa). Mg(2+) is bound by residues D47 and E49. S92 carries the phosphoserine modification. The residue at position 122 (Y122) is a Phosphotyrosine. D147 serves as a coordination point for Mg(2+). Position 173 is an N6-acetyllysine (K173). Residue H194 is part of the active site. D199 provides a ligand contact to Mg(2+).

This sequence belongs to the oligoribonuclease family. In terms of assembly, homodimer. Homotetramer. It depends on Mn(2+) as a cofactor. The cofactor is Mg(2+). In terms of tissue distribution, highly expressed in the heart and at lower levels in the lymph nodes, brain, lung, liver, spleen and thymus.

Its subcellular location is the mitochondrion intermembrane space. The protein localises to the mitochondrion matrix. It is found in the mitochondrion. It localises to the cytoplasm. The protein resides in the nucleus. Its activity is regulated as follows. Inhibited by adenosine 3',5'-bisphosphate. Its function is as follows. 3'-to-5'exoribonuclease that preferentially degrades DNA and RNA oligonucleotides composed of only two nucleotides. Binds and degrades longer oligonucleotides with a lower affinity. Plays dual roles in mitochondria, scavenging nanoRNAs (small RNA oligonucleotides of &lt;5 nucleotides) that are produced by the degradosome and clearing short RNAs that are generated by RNA processing. Essential for correct initiation of mitochondrial transcription, degrading mitochondrial RNA dinucleotides to prevent RNA-primed transcription at non-canonical sites in the mitochondrial genome. Essential for embryonic development. 3'-to-5'exoribonuclease that preferentially degrades DNA and RNA oligonucleotides composed of only two nucleotides. This chain is Oligoribonuclease, mitochondrial (REXO2), found in Homo sapiens (Human).